The chain runs to 139 residues: D-ribose pyranase (139 aa).

H20 serves as the catalytic Proton donor. Substrate is bound by residues D28, H106, and 128–130; that span reads FAN.

The protein belongs to the RbsD / FucU family. RbsD subfamily. Homodecamer.

The protein resides in the cytoplasm. It carries out the reaction beta-D-ribopyranose = beta-D-ribofuranose. Its pathway is carbohydrate metabolism; D-ribose degradation; D-ribose 5-phosphate from beta-D-ribopyranose: step 1/2. Functionally, catalyzes the interconversion of beta-pyran and beta-furan forms of D-ribose. This is D-ribose pyranase from Yersinia pseudotuberculosis serotype O:1b (strain IP 31758).